Reading from the N-terminus, the 462-residue chain is Trigger factor (462 aa).

The region spanning 172–257 is the PPIase FKBP-type domain; the sequence is GDKATIDFVG…LKALAAPGET (86 aa). The segment at 443 to 462 is disordered; sequence LLAADEEDEEEAAESSAALV. Acidic residues predominate over residues 444 to 455; it reads LAADEEDEEEAA.

Belongs to the FKBP-type PPIase family. Tig subfamily.

It localises to the cytoplasm. The catalysed reaction is [protein]-peptidylproline (omega=180) = [protein]-peptidylproline (omega=0). Functionally, involved in protein export. Acts as a chaperone by maintaining the newly synthesized protein in an open conformation. Functions as a peptidyl-prolyl cis-trans isomerase. The sequence is that of Trigger factor from Methylocella silvestris (strain DSM 15510 / CIP 108128 / LMG 27833 / NCIMB 13906 / BL2).